The sequence spans 126 residues: Acidic phospholipase A2 S1E6-b (126 aa).

An N-terminal signal peptide occupies residues Val1–Gly3. Cystine bridges form between Cys29-Cys119, Cys31-Cys47, Cys46-Cys98, Cys52-Cys126, Cys53-Cys91, Cys60-Cys84, and Cys78-Cys89. Ca(2+)-binding residues include Tyr30, Gly32, and Gly34. Residue His50 is part of the active site. A Ca(2+)-binding site is contributed by Asp51. Residue Asp92 is part of the active site.

As to quaternary structure, homodimer. The cofactor is Ca(2+). In terms of tissue distribution, expressed by the venom gland.

The protein localises to the secreted. The enzyme catalyses a 1,2-diacyl-sn-glycero-3-phosphocholine + H2O = a 1-acyl-sn-glycero-3-phosphocholine + a fatty acid + H(+). In terms of biological role, snake venom phospholipase that inhibits ADP-induced platelet aggregation. PLA2 catalyzes the calcium-dependent hydrolysis of the 2-acyl groups in 3-sn-phosphoglycerides. In Calloselasma rhodostoma (Malayan pit viper), this protein is Acidic phospholipase A2 S1E6-b.